Reading from the N-terminus, the 451-residue chain is Phosphoglucosamine mutase (451 aa).

Catalysis depends on Ser-104, which acts as the Phosphoserine intermediate. 4 residues coordinate Mg(2+): Ser-104, Asp-249, Asp-251, and Asp-253. Residue Ser-104 is modified to Phosphoserine.

It belongs to the phosphohexose mutase family. Mg(2+) is required as a cofactor. Activated by phosphorylation.

It carries out the reaction alpha-D-glucosamine 1-phosphate = D-glucosamine 6-phosphate. Catalyzes the conversion of glucosamine-6-phosphate to glucosamine-1-phosphate. The chain is Phosphoglucosamine mutase from Psychrobacter sp. (strain PRwf-1).